The following is a 321-amino-acid chain: Olfactory receptor 52N2 (321 aa).

Topologically, residues 1–27 are extracellular; the sequence is MSGDNSSSLTPGFFILNGVPGLEATHI. Residue Asn5 is glycosylated (N-linked (GlcNAc...) asparagine). The chain crosses the membrane as a helical span at residues 28 to 48; the sequence is WISLPFCFMYIIAVVGNCGLI. Residues 49-56 are Cytoplasmic-facing; that stretch reads CLISHEEA. Residues 57–77 traverse the membrane as a helical segment; it reads LHRPMYYFLALLSFTDVTLCT. The Extracellular segment spans residues 78 to 101; it reads TMVPNMLCIFWFNLKEIDFNACLA. An intrachain disulfide couples Cys99 to Cys191. The helical transmembrane segment at 102-122 threads the bilayer; that stretch reads QMFFVHMLTGMESGVLMLMAL. Topologically, residues 123–141 are cytoplasmic; sequence DRYVAICYPLRYATILTNP. A helical transmembrane segment spans residues 142 to 162; sequence VIAKAGLATFLRNVMLIIPFT. Residues 163 to 198 lie on the Extracellular side of the membrane; the sequence is LLTKRLPYCRGNFIPHTYCDHMSVAKVSCGNFKVNA. The helical transmembrane segment at 199-219 threads the bilayer; that stretch reads IYGLMVALLIGVFDICCISVS. Residues 220 to 239 are Cytoplasmic-facing; that stretch reads YTMILQAVMSLSSADARHKA. Residues 240-260 traverse the membrane as a helical segment; it reads FSTCTSHMCSIVITYVAAFFT. At 261–276 the chain is on the extracellular side; sequence FFTHRFVGHNIPNHIH. The helical transmembrane segment at 277–297 threads the bilayer; sequence IIVANLYLLLPPTMNPIVYGV. Residues 298–321 are Cytoplasmic-facing; sequence KTKQIQEGVIKFLLGDKVSFTYDK.

It belongs to the G-protein coupled receptor 1 family.

It localises to the cell membrane. Its function is as follows. Odorant receptor. The chain is Olfactory receptor 52N2 (OR52N2) from Homo sapiens (Human).